The sequence spans 351 residues: UPF0104 membrane protein MTH_887 (351 aa).

Transmembrane regions (helical) follow at residues 20 to 40, 51 to 71, 137 to 157, 165 to 185, 244 to 264, 275 to 295, 304 to 324, and 328 to 348; these read IVLS…FAGF, SPYF…LWTL, VFEF…IMTW, IVVS…VYAG, FVIG…RLYV, AVPL…PILP, ILVG…AASV, and IASY…YGKQ.

The protein belongs to the UPF0104 family.

The protein localises to the cell membrane. This is UPF0104 membrane protein MTH_887 from Methanothermobacter thermautotrophicus (strain ATCC 29096 / DSM 1053 / JCM 10044 / NBRC 100330 / Delta H) (Methanobacterium thermoautotrophicum).